A 248-amino-acid polypeptide reads, in one-letter code: Probable transcriptional regulatory protein RPD_4171 (248 aa).

The interval 1-22 (MAGHSQFKNIMHRKGKQDAQRS) is disordered.

It belongs to the TACO1 family.

The protein resides in the cytoplasm. This Rhodopseudomonas palustris (strain BisB5) protein is Probable transcriptional regulatory protein RPD_4171.